A 291-amino-acid chain; its full sequence is Tyrosine-protein kinase PtkA (291 aa).

The segment at Met1 to Pro79 is disordered. The segment covering His23–Asn60 has biased composition (polar residues). Tyr262 carries the phosphotyrosine modification.

The protein belongs to the HAD-like hydrolase superfamily. CbbY/CbbZ/Gph/YieH family. In terms of assembly, interacts with PtpA. Autophosphorylated.

It catalyses the reaction L-tyrosyl-[protein] + ATP = O-phospho-L-tyrosyl-[protein] + ADP + H(+). Required for growth within macrophages. Catalyzes the phosphorylation of PtpA on the tyrosine residues at positions 128 and 129, thereby increasing PtpA phosphatase activity and promoting pathogenicity. The chain is Tyrosine-protein kinase PtkA from Mycobacterium bovis (strain ATCC BAA-935 / AF2122/97).